A 566-amino-acid polypeptide reads, in one-letter code: Putative ABC transporter ATP-binding protein BCE_2668 (566 aa).

ABC transporter domains follow at residues 5-246 (ISFE…GLRE) and 300-533 (LKVE…ANLK). Residues 39–46 (GRSGSGKS) and 333–340 (GHNGAGKS) each bind ATP.

The protein belongs to the ABC transporter superfamily.

Its subcellular location is the cell membrane. Probably part of an ABC transporter complex. Responsible for energy coupling to the transport system. This Bacillus cereus (strain ATCC 10987 / NRS 248) protein is Putative ABC transporter ATP-binding protein BCE_2668.